A 247-amino-acid chain; its full sequence is Phycocyanobilin:ferredoxin oxidoreductase (247 aa).

The protein belongs to the HY2 family.

The catalysed reaction is (2R,3Z)-phycocyanobilin + 4 oxidized [2Fe-2S]-[ferredoxin] = biliverdin IXalpha + 4 reduced [2Fe-2S]-[ferredoxin] + 4 H(+). In terms of biological role, catalyzes the four-electron reduction of biliverdin IX-alpha (2-electron reduction at both the A and D rings); the reaction proceeds via an isolatable 2-electron intermediate, 181,182-dihydrobiliverdin. This Prochlorococcus marinus (strain SARG / CCMP1375 / SS120) protein is Phycocyanobilin:ferredoxin oxidoreductase (pcyA).